Reading from the N-terminus, the 136-residue chain is Acidic phospholipase A2 CC-PLA2-2 (136 aa).

The first 16 residues, 1-16, serve as a signal peptide directing secretion; the sequence is MRTLWIVAVWLMGVEG. 7 cysteine pairs are disulfide-bonded: Cys-42-Cys-129, Cys-44-Cys-60, Cys-59-Cys-109, Cys-65-Cys-136, Cys-66-Cys-102, Cys-73-Cys-95, and Cys-90-Cys-100. 3 residues coordinate Ca(2+): Tyr-43, Gly-45, and Gly-47. His-63 is an active-site residue. Residue Asp-64 participates in Ca(2+) binding. Asp-103 is an active-site residue.

Belongs to the phospholipase A2 family. Group II subfamily. D49 sub-subfamily. Requires Ca(2+) as cofactor. Glycosylated (2.5%). As to expression, expressed by the venom gland.

It localises to the secreted. The enzyme catalyses a 1,2-diacyl-sn-glycero-3-phosphocholine + H2O = a 1-acyl-sn-glycero-3-phosphocholine + a fatty acid + H(+). Snake venom phospholipase A2 that inhibits blood coagulation and platelet aggregation induced by ADP and arachidonic acid. Inhibits tumor cell adhesion and migration in a dose-dependent manner. Abolishes the attachment of human brain microvascular endothelial cells (HBMEC) to fibrinogen (IC(50)=0.2 uM) and dramatically reduces its adhesion to fibronectin (IC(50)=0.3 uM), whereas no effect is observed on type I collagen, vitronectin or laminin 1. Also blocks the cell migration toward fibronectin and fibrinogen. These effects are not dependent of the catalytic activity, but are mediated by alpha-5/beta-1 (ITGA5/ITGB1) and alpha-v-containing (ITGAV) integrins. Also shows anti-angiogenic activity in chicken chorioallantoix membrane assay. Has a relatively high enzymatic activity. PLA2 catalyzes the calcium-dependent hydrolysis of the 2-acyl groups in 3-sn-phosphoglycerides. The chain is Acidic phospholipase A2 CC-PLA2-2 from Cerastes cerastes (Horned desert viper).